Consider the following 133-residue polypeptide: uncharacterized protein (133 aa).

2 consecutive transmembrane segments (helical) span residues 8–28 (MVLL…LLLL) and 46–66 (SFSI…SIGA).

It localises to the membrane. This is an uncharacterized protein from Saccharomyces cerevisiae (strain ATCC 204508 / S288c) (Baker's yeast).